The following is a 313-amino-acid chain: NADH-ubiquinone oxidoreductase chain 1 (313 aa).

The next 8 helical transmembrane spans lie at 6 to 26 (LLSGVISCVCALLAVAFFTLL), 71 to 91 (VFPFLVCPAMSLFLALVLWIL), 105 to 125 (MLLFLCVSSLGVYSVMGAGWF), 149 to 169 (MSLILMSCLLLVGSMSLSMIM), 173 to 193 (FFVWVAFVNFFMMLMWFVSCV), 220 to 242 (GVGFALLFMAEYGNILFMSVLVI), 255 to 275 (FGMGLCVMVSFVGWLFIWVRA), and 293 to 313 (YLPSVLSILMFLVVSVYILNG).

This sequence belongs to the complex I subunit 1 family.

It is found in the mitochondrion inner membrane. The enzyme catalyses a ubiquinone + NADH + 5 H(+)(in) = a ubiquinol + NAD(+) + 4 H(+)(out). Its function is as follows. Core subunit of the mitochondrial membrane respiratory chain NADH dehydrogenase (Complex I) that is believed to belong to the minimal assembly required for catalysis. Complex I functions in the transfer of electrons from NADH to the respiratory chain. The immediate electron acceptor for the enzyme is believed to be ubiquinone. The chain is NADH-ubiquinone oxidoreductase chain 1 (ND1) from Heterololigo bleekeri (Spear squid).